A 424-amino-acid chain; its full sequence is Histidine--tRNA ligase (424 aa).

The protein belongs to the class-II aminoacyl-tRNA synthetase family. As to quaternary structure, homodimer.

It localises to the cytoplasm. It carries out the reaction tRNA(His) + L-histidine + ATP = L-histidyl-tRNA(His) + AMP + diphosphate + H(+). This Marinomonas sp. (strain MWYL1) protein is Histidine--tRNA ligase.